A 627-amino-acid chain; its full sequence is MTIHHHGSAERKSIDDYSDIPRGEACKQLVEQLNRNLYSLNSNMQTTFKQMVHVETRIGHEISLLSSCLQENMSKCTMPYAPHEEQLVQLDSAKRNLKQLTRLLDARQIFDAEDSQSEKLKDRAIDDSLLPTLVAIGDNLKIIKELGAKPKFDAETYHKTKDRYLAWKGTEFAVKFDTPGGLDDIFDAFTTLNSVNDFYRLYQHHFDQSLNNLNKNSGIEDEKSLKEMGTVFVTKAAEHFRTHIGSLCKYCDENEAFTRLLDAWKNYIKNGTLEKLFEQSMENYNNYDLLSDLKSVVTKAYEEFETNTAGGPEDDEESIENIERIIVDGLMESAKKPLSEKLRSMVEPPPLNFRSVAEVMSSLENFAYLLREISHQLLEIYLEDEGREFMISILKPIFTDYTMRLCRMEDNSTPKVKLEEYLERIALAGQLSTIVEEYKDQTEIKNGLELKNAKKWMNERVKDAIRASHRFVTDKMPNHGSETYKESADMAKSALPTPQDFVVTATQNLLHLLRFWEEALANENTKVALIAHVMDINKESLETPDDDAIFAAILDRIASHVVKKLLQSINDVWLTDGKTATLSKGLVKEFLCDAEYLRDALVDLRAGTHDNLDSTINKLREQLKTMS.

This is an uncharacterized protein from Caenorhabditis elegans.